We begin with the raw amino-acid sequence, 629 residues long: tRNA uridine 5-carboxymethylaminomethyl modification enzyme MnmG (629 aa).

FAD-binding positions include 13-18 (GGGHAG), Val125, and Ser180. An NAD(+)-binding site is contributed by 273-287 (GPRYCPSIEDKIHRF). Gln370 is an FAD binding site.

This sequence belongs to the MnmG family. As to quaternary structure, homodimer. Heterotetramer of two MnmE and two MnmG subunits. It depends on FAD as a cofactor.

Its subcellular location is the cytoplasm. Its function is as follows. NAD-binding protein involved in the addition of a carboxymethylaminomethyl (cmnm) group at the wobble position (U34) of certain tRNAs, forming tRNA-cmnm(5)s(2)U34. The polypeptide is tRNA uridine 5-carboxymethylaminomethyl modification enzyme MnmG (Shewanella sp. (strain ANA-3)).